We begin with the raw amino-acid sequence, 200 residues long: TATA-box-binding protein 2 (200 aa).

2 tandem repeats follow at residues 25-101 (LQNI…ARII) and 115-192 (IQNI…YPVL).

Belongs to the TBP family. Belongs to the TFIID complex together with the TBP-associated factors (TAFs). Binds DNA as monomer.

The protein localises to the nucleus. In terms of biological role, general transcription factor that functions at the core of the DNA-binding multiprotein factor TFIID. Binding of TFIID to the TATA box is the initial transcriptional step of the pre-initiation complex (PIC), playing a role in the activation of eukaryotic genes transcribed by RNA polymerase II. The chain is TATA-box-binding protein 2 (TBP2) from Zea mays (Maize).